The chain runs to 75 residues: Large ribosomal subunit protein bL31 (75 aa).

Belongs to the bacterial ribosomal protein bL31 family. Type A subfamily. In terms of assembly, part of the 50S ribosomal subunit.

In terms of biological role, binds the 23S rRNA. The polypeptide is Large ribosomal subunit protein bL31 (Chlorobium phaeovibrioides (strain DSM 265 / 1930) (Prosthecochloris vibrioformis (strain DSM 265))).